The chain runs to 216 residues: 3-isopropylmalate dehydratase small subunit (216 aa).

Belongs to the LeuD family. LeuD type 1 subfamily. In terms of assembly, heterodimer of LeuC and LeuD.

The enzyme catalyses (2R,3S)-3-isopropylmalate = (2S)-2-isopropylmalate. It participates in amino-acid biosynthesis; L-leucine biosynthesis; L-leucine from 3-methyl-2-oxobutanoate: step 2/4. Catalyzes the isomerization between 2-isopropylmalate and 3-isopropylmalate, via the formation of 2-isopropylmaleate. The sequence is that of 3-isopropylmalate dehydratase small subunit from Psychrobacter arcticus (strain DSM 17307 / VKM B-2377 / 273-4).